A 160-amino-acid chain; its full sequence is SsrA-binding protein (160 aa).

The segment at Lys131–Asp160 is disordered.

It belongs to the SmpB family.

It is found in the cytoplasm. Functionally, required for rescue of stalled ribosomes mediated by trans-translation. Binds to transfer-messenger RNA (tmRNA), required for stable association of tmRNA with ribosomes. tmRNA and SmpB together mimic tRNA shape, replacing the anticodon stem-loop with SmpB. tmRNA is encoded by the ssrA gene; the 2 termini fold to resemble tRNA(Ala) and it encodes a 'tag peptide', a short internal open reading frame. During trans-translation Ala-aminoacylated tmRNA acts like a tRNA, entering the A-site of stalled ribosomes, displacing the stalled mRNA. The ribosome then switches to translate the ORF on the tmRNA; the nascent peptide is terminated with the 'tag peptide' encoded by the tmRNA and targeted for degradation. The ribosome is freed to recommence translation, which seems to be the essential function of trans-translation. The polypeptide is SsrA-binding protein (Azotobacter vinelandii (strain DJ / ATCC BAA-1303)).